Reading from the N-terminus, the 74-residue chain is Exodeoxyribonuclease 7 small subunit (74 aa).

The protein belongs to the XseB family. In terms of assembly, heterooligomer composed of large and small subunits.

The protein resides in the cytoplasm. The catalysed reaction is Exonucleolytic cleavage in either 5'- to 3'- or 3'- to 5'-direction to yield nucleoside 5'-phosphates.. Its function is as follows. Bidirectionally degrades single-stranded DNA into large acid-insoluble oligonucleotides, which are then degraded further into small acid-soluble oligonucleotides. This Clostridium botulinum (strain Eklund 17B / Type B) protein is Exodeoxyribonuclease 7 small subunit.